The sequence spans 358 residues: Endoplasmic reticulum junction formation protein lunapark-B (358 aa).

The Cytoplasmic segment spans residues 1 to 45 (MGAIISRWKTKLTTVEQLENIDKEIKQLEEFRAKNQRLQKLWVGR). The stretch at 9-41 (KTKLTTVEQLENIDKEIKQLEEFRAKNQRLQKL) forms a coiled coil. Residues 46–66 (LLLYSSALYLLISLFVYLLYL) traverse the membrane as a helical segment. Residues 67-69 (PEQ) lie on the Lumenal side of the membrane. A helical membrane pass occupies residues 70–90 (WLLRLAMALPFFIYPVLVWFI). Topologically, residues 91-358 (RRFLIFLFSK…SRGMDKHGRA (268 aa)) are cytoplasmic. The stretch at 99–128 (SKRSERNNDKLEDLKATKKKILEEVMETET) forms a coiled coil. The segment at 275–300 (CQQCFSHNGMALKEEFEYLAFRCAYC) adopts a C4-type; plays a role in ER morphology zinc-finger fold. The tract at residues 320 to 358 (NFEKRLRAESSTPGPAPHSATDTEESAPPSRGMDKHGRA) is disordered.

Belongs to the lunapark family. As to quaternary structure, homodimer; homodimerization requires the C4-type zinc finger motif and decreases during mitosis in a phosphorylation-dependent manner. Post-translationally, phosphorylated. Phosphorylation occurs during interphase. Phosphorylation also occurs during mitosis; these phosphorylations reduce both its homodimerization and the ER three-way tubular junction formation.

Its subcellular location is the endoplasmic reticulum membrane. In terms of biological role, endoplasmic reticulum (ER)-shaping membrane protein that plays a role in determining ER morphology. Involved in the stabilization of nascent three-way ER tubular junctions within the ER network. May also play a role as a curvature-stabilizing protein within three-way ER tubular junction network. In Takifugu rubripes (Japanese pufferfish), this protein is Endoplasmic reticulum junction formation protein lunapark-B (lnpkb).